Consider the following 416-residue polypeptide: RNA polymerase sigma factor SigA (416 aa).

The interval 184-254 (MVQSNLRLVV…TRAIADQSRT (71 aa)) is sigma-70 factor domain-2. Residues 208–211 (DLIQ) carry the Interaction with polymerase core subunit RpoC motif. Positions 263 to 338 (ETISRIKKTT…EADGETPEDE (76 aa)) are sigma-70 factor domain-3. The segment at 351–404 (VLDTLSPRERDVLRLRYGLDDGRMKTLEEIGQIFNVTRERIRQIEAKALRKLRH) is sigma-70 factor domain-4. The segment at residues 377 to 396 (LEEIGQIFNVTRERIRQIEA) is a DNA-binding region (H-T-H motif).

Belongs to the sigma-70 factor family. RpoD/SigA subfamily. Interacts transiently with the RNA polymerase catalytic core.

It localises to the cytoplasm. Sigma factors are initiation factors that promote the attachment of RNA polymerase to specific initiation sites and are then released. This sigma factor is the primary sigma factor during exponential growth. This is RNA polymerase sigma factor SigA from Microcystis aeruginosa.